Consider the following 825-residue polypeptide: NT-3 growth factor receptor (825 aa).

The signal sequence occupies residues 1–31 (MDVSLCPAKCSFWRIFLLGSVWLDYVGSVLA). Cystine bridges form between Cys32–Cys38 and Cys36–Cys45. At 32 to 429 (CPANCVCSKT…TVTHKPEEDT (398 aa)) the chain is on the extracellular side. N-linked (GlcNAc...) asparagine glycosylation is found at Asn68, Asn72, and Asn79. 2 LRR repeats span residues 104–125 (GLQKLTIKNSGLRSIQPRAFAK) and 128–149 (HLRYINLSSNRLTTLSWQLFQT). Residues Asn133 and Asn163 are each glycosylated (N-linked (GlcNAc...) asparagine). Residues 160 to 209 (NFFNCSCDIRWMQLWQEQGEARLNSQNLYCINADGSQLPLFRMNISQCDL) enclose the LRRCT domain. Cystine bridges form between Cys164–Cys189 and Cys166–Cys207. 7 N-linked (GlcNAc...) asparagine glycosylation sites follow: Asn203, Asn218, Asn232, Asn259, Asn267, Asn272, and Asn294. Ig-like C2-type domains are found at residues 210–300 (PEIS…VALT) and 309–382 (SLEE…IAKN). An intrachain disulfide couples Cys231 to Cys284. Residues Cys320 and Cys362 are joined by a disulfide bond. Residues Asn375 and Asn388 are each glycosylated (N-linked (GlcNAc...) asparagine). A helical transmembrane segment spans residues 430–453 (FGVSIAVGLAAFACVLLVVLFIMI). At 454-825 (NKYGRRSKFG…ATPIYLDILG (372 aa)) the chain is on the cytoplasmic side. Ser493 bears the Phosphoserine mark. Position 516 is a phosphotyrosine; by autocatalysis (Tyr516). One can recognise a Protein kinase domain in the interval 538–825 (IVLKRELGEG…ATPIYLDILG (288 aa)). ATP contacts are provided by residues 544-552 (LGEGAFGKV) and Lys572. The active-site Proton acceptor is the Asp679. A phosphotyrosine; by autocatalysis mark is found at Tyr705, Tyr709, and Tyr710.

This sequence belongs to the protein kinase superfamily. Tyr protein kinase family. Insulin receptor subfamily. In terms of assembly, exists in a dynamic equilibrium between monomeric (low affinity) and dimeric (high affinity) structures. Binds SH2B2. Interacts with SQSTM1 and KIDINS220. Interacts with PTPRS. Interacts with MAPK8IP3/JIP3. Post-translationally, ligand-mediated auto-phosphorylation.

The protein resides in the membrane. It catalyses the reaction L-tyrosyl-[protein] + ATP = O-phospho-L-tyrosyl-[protein] + ADP + H(+). Functionally, receptor tyrosine kinase involved in nervous system and probably heart development. Upon binding of its ligand NTF3/neurotrophin-3, NTRK3 autophosphorylates and activates different signaling pathways, including the phosphatidylinositol 3-kinase/AKT and the MAPK pathways, that control cell survival and differentiation. This chain is NT-3 growth factor receptor (NTRK3), found in Saimiri boliviensis boliviensis (Bolivian squirrel monkey).